Reading from the N-terminus, the 148-residue chain is Deoxyuridine 5'-triphosphate nucleotidohydrolase (148 aa).

Residues 67–69 (RSG), asparagine 80, 84–86 (LID), and methionine 94 contribute to the substrate site.

Belongs to the dUTPase family. Mg(2+) serves as cofactor.

It carries out the reaction dUTP + H2O = dUMP + diphosphate + H(+). It functions in the pathway pyrimidine metabolism; dUMP biosynthesis; dUMP from dCTP (dUTP route): step 2/2. Its function is as follows. This enzyme is involved in nucleotide metabolism: it produces dUMP, the immediate precursor of thymidine nucleotides and it decreases the intracellular concentration of dUTP so that uracil cannot be incorporated into DNA. The protein is Deoxyuridine 5'-triphosphate nucleotidohydrolase of Burkholderia multivorans (strain ATCC 17616 / 249).